A 229-amino-acid polypeptide reads, in one-letter code: Protein fmp52-2, mitochondrial (229 aa).

The N-terminal 44 residues, 1–44, are a transit peptide targeting the mitochondrion; the sequence is MTAAAVFGCTGAVGSQILATLLASDAFSSVATVSRKLPTAESPK.

Belongs to the FMP52 family.

Its subcellular location is the mitochondrion outer membrane. This is Protein fmp52-2, mitochondrial (fmp522) from Aspergillus terreus (strain NIH 2624 / FGSC A1156).